Here is a 443-residue protein sequence, read N- to C-terminus: Protoheme IX farnesyltransferase, mitochondrial (443 aa).

Positions 68 to 113 (LSQRVKPKPEPPASPFLEHTSSGQARADEDELPSFPAPSRPLSRKP) are disordered. Helical transmembrane passes span 174–194 (AGFALAPGPFDWSCFLLTSLG), 230–250 (ISPLLAVSFATCCAVPGVALL), 252–272 (WGVNPLTGALGVFNIFLYTCC), 286–306 (VGAVVGAIPPVMGWTAATGSL), 308–328 (AGALLLGGILYSWQFPHFNAL), 363–383 (LIALSTAAPVLDITTWVFPVI), and 410–430 (LFFCSLWHLPLLLLLMLTCKQ).

This sequence belongs to the UbiA prenyltransferase family.

The protein localises to the mitochondrion membrane. The enzyme catalyses heme b + (2E,6E)-farnesyl diphosphate + H2O = Fe(II)-heme o + diphosphate. Its function is as follows. Converts protoheme IX and farnesyl diphosphate to heme O. This is Protoheme IX farnesyltransferase, mitochondrial (Cox10) from Mus musculus (Mouse).